An 82-amino-acid chain; its full sequence is MAEVSSSTVRRPFHRRRKTCPFSGANAPKIDYKDVRLLQRYISERGKIVPSRITAVSQKKQRELAKAIKRARFLGLLPYVVA.

The segment at 1 to 20 (MAEVSSSTVRRPFHRRRKTC) is disordered.

The protein belongs to the bacterial ribosomal protein bS18 family. Part of the 30S ribosomal subunit. Forms a tight heterodimer with protein bS6.

Functionally, binds as a heterodimer with protein bS6 to the central domain of the 16S rRNA, where it helps stabilize the platform of the 30S subunit. The chain is Small ribosomal subunit protein bS18 from Allorhizobium ampelinum (strain ATCC BAA-846 / DSM 112012 / S4) (Agrobacterium vitis (strain S4)).